The following is a 161-amino-acid chain: NADH-quinone oxidoreductase subunit I (161 aa).

2 consecutive 4Fe-4S ferredoxin-type domains span residues 52–82 and 92–121; these read LRRY…IESE and KRYD…ETRV. [4Fe-4S] cluster contacts are provided by C62, C65, C68, C72, C101, C104, C107, and C111.

It belongs to the complex I 23 kDa subunit family. As to quaternary structure, NDH-1 is composed of 14 different subunits. Subunits NuoA, H, J, K, L, M, N constitute the membrane sector of the complex. Requires [4Fe-4S] cluster as cofactor.

Its subcellular location is the cell inner membrane. The enzyme catalyses a quinone + NADH + 5 H(+)(in) = a quinol + NAD(+) + 4 H(+)(out). In terms of biological role, NDH-1 shuttles electrons from NADH, via FMN and iron-sulfur (Fe-S) centers, to quinones in the respiratory chain. The immediate electron acceptor for the enzyme in this species is believed to be ubiquinone. Couples the redox reaction to proton translocation (for every two electrons transferred, four hydrogen ions are translocated across the cytoplasmic membrane), and thus conserves the redox energy in a proton gradient. In Aromatoleum aromaticum (strain DSM 19018 / LMG 30748 / EbN1) (Azoarcus sp. (strain EbN1)), this protein is NADH-quinone oxidoreductase subunit I.